Reading from the N-terminus, the 371-residue chain is 3-isopropylmalate dehydrogenase B (371 aa).

79 to 93 (GSKVDHIRRGLDGPE) is an NAD(+) binding site. Substrate contacts are provided by Arg100, Arg110, Arg142, and Asp229. Asp229, Asp254, and Asp258 together coordinate Mg(2+). Residue 296-308 (GSAPTIAGKNIAN) participates in NAD(+) binding.

This sequence belongs to the isocitrate and isopropylmalate dehydrogenases family. Homodimer. Requires Mg(2+) as cofactor. It depends on Mn(2+) as a cofactor.

Its subcellular location is the cytoplasm. The enzyme catalyses (2R,3S)-3-isopropylmalate + NAD(+) = 4-methyl-2-oxopentanoate + CO2 + NADH. It participates in amino-acid biosynthesis; L-leucine biosynthesis; L-leucine from 3-methyl-2-oxobutanoate: step 3/4. Its function is as follows. Catalyzes the oxidation of 3-carboxy-2-hydroxy-4-methylpentanoate (3-isopropylmalate) to 3-carboxy-4-methyl-2-oxopentanoate. The product decarboxylates to 4-methyl-2 oxopentanoate. The protein is 3-isopropylmalate dehydrogenase B (leu2B) of Aspergillus niger.